A 380-amino-acid polypeptide reads, in one-letter code: Lipid-A-disaccharide synthase (380 aa).

It belongs to the LpxB family.

It carries out the reaction a lipid X + a UDP-2-N,3-O-bis[(3R)-3-hydroxyacyl]-alpha-D-glucosamine = a lipid A disaccharide + UDP + H(+). Its pathway is bacterial outer membrane biogenesis; LPS lipid A biosynthesis. Functionally, condensation of UDP-2,3-diacylglucosamine and 2,3-diacylglucosamine-1-phosphate to form lipid A disaccharide, a precursor of lipid A, a phosphorylated glycolipid that anchors the lipopolysaccharide to the outer membrane of the cell. The sequence is that of Lipid-A-disaccharide synthase from Francisella philomiragia subsp. philomiragia (strain ATCC 25017 / CCUG 19701 / FSC 153 / O#319-036).